The following is a 170-amino-acid chain: MYPRVMHAVCFLALGLISYVAVCAENTVTTNCLVKAENTHLTCKCNPNTTSNTNNGSKCHAMCKCRVTEPITMLGAYSAWGAGSFVATLIVLLVVFFVIYAREEEKNNTGTEVDQCLAYRSLTRKKLEQHAAKKQNIYERIPYRPSRQNDNSPLIEPTGTDDEEDEDDDV.

The signal sequence occupies residues 1–24; sequence MYPRVMHAVCFLALGLISYVAVCA. 2 N-linked (GlcNAc...) asparagine; by host glycosylation sites follow: asparagine 48 and asparagine 55. Residues 79-99 form a helical membrane-spanning segment; that stretch reads AWGAGSFVATLIVLLVVFFVI. N-linked (GlcNAc...) asparagine; by host glycosylation is present at asparagine 107. The tract at residues 132–170 is disordered; the sequence is AKKQNIYERIPYRPSRQNDNSPLIEPTGTDDEEDEDDDV. Residues 159 to 170 show a composition bias toward acidic residues; the sequence is GTDDEEDEDDDV.

This sequence belongs to the HHV-5 RL10 protein family.

The protein localises to the virion membrane. The protein is Protein IRL10 (RL10) of Homo sapiens (Human).